Here is a 22-residue protein sequence, read N- to C-terminus: thr operon leader peptide (22 aa).

The interval 1–22 is disordered; it reads MRNISLTTTIITTTDTTGNGAG. The segment covering 7–22 has biased composition (low complexity); it reads TTTIITTTDTTGNGAG.

Belongs to the thr operon leader peptide family.

Its function is as follows. This protein is involved in control of the biosynthesis of threonine. The sequence is that of thr operon leader peptide from Serratia marcescens.